An 81-amino-acid chain; its full sequence is Weak neurotoxin OH-72 (81 aa).

Residues 1–16 form the signal peptide; sequence LTLVVVTIVCLDLGYT. Intrachain disulfides connect C19-C40, C22-C27, C33-C58, C62-C73, and C74-C79.

The protein belongs to the three-finger toxin family. Ancestral subfamily. Orphan group II sub-subfamily. Expressed by the venom gland.

The protein localises to the secreted. In terms of biological role, binds with low affinity to muscular (alpha-1-beta-1-delta-epsilon/CHRNA1-CHRNB1-CHRND-CHRNE) and very low affinity to neuronal (alpha-7/CHRNA7) nicotinic acetylcholine receptor (nAChR). The chain is Weak neurotoxin OH-72 from Ophiophagus hannah (King cobra).